Consider the following 221-residue polypeptide: HP1-HOAP-interacting protein (221 aa).

The tract at residues 69–113 (NAKRHKMARETAASITDVSGSQSSSHQSAPSLHVSGQSSEFGASY) is disordered. The segment covering 86–103 (VSGSQSSSHQSAPSLHVS) has biased composition (low complexity).

As to quaternary structure, component of the HipHop-HOAP telomere-capping complex, composed of at least HipHop and cav/HOAP, and may include Su(var)205/HP1; HipHop and cav/HOAP, but not Su(var)205, are interdependent for their protein stability. Interacts (via N-terminus) with cav/HOAP and Su(var)205/HP1. The HipHop-HOAP complex recruits the MTV complex, consisting of moi/modigliani, tea and ver/verrocchio, to telomeres to form the terminin telomere-capping complex.

The protein resides in the nucleus. Its subcellular location is the chromosome. It localises to the telomere. Its function is as follows. Part of the HipHop-HOAP complex that recruits the MTV complex to form the terminin telomere-capping complex, which binds to chromosome ends in a sequence-independent manner and prevents telomere fusion. The chain is HP1-HOAP-interacting protein from Drosophila melanogaster (Fruit fly).